The primary structure comprises 135 residues: ATP synthase epsilon chain (135 aa).

The protein belongs to the ATPase epsilon chain family. In terms of assembly, F-type ATPases have 2 components, CF(1) - the catalytic core - and CF(0) - the membrane proton channel. CF(1) has five subunits: alpha(3), beta(3), gamma(1), delta(1), epsilon(1). CF(0) has three main subunits: a, b and c.

The protein localises to the cell inner membrane. Its function is as follows. Produces ATP from ADP in the presence of a proton gradient across the membrane. This chain is ATP synthase epsilon chain, found in Bradyrhizobium sp. (strain ORS 278).